A 198-amino-acid polypeptide reads, in one-letter code: Small ribosomal subunit protein uS4 (198 aa).

Residues 26–45 (LKKRPYAPGQHGQRRSKLSN) form a disordered region. In terms of domain architecture, S4 RNA-binding spans 91 to 154 (SRLDNVVYRL…KNLTIVKEAL (64 aa)).

Belongs to the universal ribosomal protein uS4 family. In terms of assembly, part of the 30S ribosomal subunit. Contacts protein S5. The interaction surface between S4 and S5 is involved in control of translational fidelity.

In terms of biological role, one of the primary rRNA binding proteins, it binds directly to 16S rRNA where it nucleates assembly of the body of the 30S subunit. With S5 and S12 plays an important role in translational accuracy. In Acholeplasma laidlawii (strain PG-8A), this protein is Small ribosomal subunit protein uS4.